The following is a 194-amino-acid chain: Calcium-binding protein J (194 aa).

2 consecutive EF-hand domains span residues 62 to 97 and 98 to 133; these read WDKDLLIQLFKLFDTDCNGILDFKEFVTSLYIMTKA and PVVEKLSLLFDLFDKDQSGHLEVDEVEKLIGVAVAC. Ca(2+) contacts are provided by Asp-75, Asp-77, Asn-79, Glu-86, Asp-111, Asp-113, Ser-115, His-117, and Glu-122.

This sequence belongs to the recoverin family.

This is Calcium-binding protein J (cbpJ) from Dictyostelium discoideum (Social amoeba).